The primary structure comprises 115 residues: General stress protein 17M (115 aa).

This Bacillus subtilis (strain 168) protein is General stress protein 17M (yflT).